Reading from the N-terminus, the 205-residue chain is Large ribosomal subunit protein bL21m (205 aa).

The transit peptide at 1 to 39 (MAASSLTVTLGRLASACSHSILRPSGPGAASLWSASRRF) directs the protein to the mitochondrion.

It belongs to the bacterial ribosomal protein bL21 family. Component of the mitochondrial large ribosomal subunit (mt-LSU). Mature mammalian 55S mitochondrial ribosomes consist of a small (28S) and a large (39S) subunit. The 28S small subunit contains a 12S ribosomal RNA (12S mt-rRNA) and 30 different proteins. The 39S large subunit contains a 16S rRNA (16S mt-rRNA), a copy of mitochondrial valine transfer RNA (mt-tRNA(Val)), which plays an integral structural role, and 52 different proteins.

It localises to the mitochondrion. The chain is Large ribosomal subunit protein bL21m (MRPL21) from Homo sapiens (Human).